We begin with the raw amino-acid sequence, 326 residues long: Small ribosomal subunit protein RACK1x (326 aa).

WD repeat units follow at residues 13–53, 61–100, 103–142, 147–188, 191–230, 232–270, and 290–326; these read AHTD…KSYG, GHSH…TTRR, GHTK…KYTI, GHKE…LRNS, GHSG…KLYS, EAGS…VVED, and NQKK…IGRY.

The protein belongs to the WD repeat G protein beta family. Ribosomal protein RACK1 subfamily. Homodimer and heterodimer with RACK1A or RACK1B. Interacts with GB1, MEKK1, MKK4, MKK5, MPK3 and MPK6, but not with GPA1 or MPK4. Widely expressed.

Functionally, minor component of the RACK1 regulatory proteins that play a role in multiple signal transduction pathways. Involved in multiple hormone responses and developmental processes. MAPK cascade scaffolding protein involved in the protease IV and ArgC signaling pathway but not the flg22 pathway. This Arabidopsis thaliana (Mouse-ear cress) protein is Small ribosomal subunit protein RACK1x.